We begin with the raw amino-acid sequence, 563 residues long: uncharacterized protein (563 aa).

The interval 30–303 is disordered; it reads QSIEIQPEEK…EKSPEKQVEI (274 aa). The span at 36-56 shows a compositional bias: basic and acidic residues; sequence PEEKPSEEKQPEEKSSEEKPK. Over residues 61-72 the composition is skewed to polar residues; that stretch reads SAINSEKTQKPI. Composition is skewed to basic and acidic residues over residues 101–115, 123–276, and 282–303; these read TTERPQPKTTMDDKQ, ERGR…EPRP, and EKSPDEHQEKHQEKSPEKQVEI.

Belongs to the mimivirus L41 family.

This is an uncharacterized protein from Acanthamoeba polyphaga (Amoeba).